Here is a 577-residue protein sequence, read N- to C-terminus: Proline--tRNA ligase (577 aa).

The protein belongs to the class-II aminoacyl-tRNA synthetase family. ProS type 1 subfamily. In terms of assembly, homodimer.

It localises to the cytoplasm. It catalyses the reaction tRNA(Pro) + L-proline + ATP = L-prolyl-tRNA(Pro) + AMP + diphosphate. Functionally, catalyzes the attachment of proline to tRNA(Pro) in a two-step reaction: proline is first activated by ATP to form Pro-AMP and then transferred to the acceptor end of tRNA(Pro). As ProRS can inadvertently accommodate and process non-cognate amino acids such as alanine and cysteine, to avoid such errors it has two additional distinct editing activities against alanine. One activity is designated as 'pretransfer' editing and involves the tRNA(Pro)-independent hydrolysis of activated Ala-AMP. The other activity is designated 'posttransfer' editing and involves deacylation of mischarged Ala-tRNA(Pro). The misacylated Cys-tRNA(Pro) is not edited by ProRS. The polypeptide is Proline--tRNA ligase (Helicobacter pylori (strain P12)).